Reading from the N-terminus, the 142-residue chain is Holo-[acyl-carrier-protein] synthase (142 aa).

Positions 8 and 57 each coordinate Mg(2+).

The protein belongs to the P-Pant transferase superfamily. AcpS family. It depends on Mg(2+) as a cofactor.

It localises to the cytoplasm. It carries out the reaction apo-[ACP] + CoA = holo-[ACP] + adenosine 3',5'-bisphosphate + H(+). Transfers the 4'-phosphopantetheine moiety from coenzyme A to a Ser of acyl-carrier-protein. The sequence is that of Holo-[acyl-carrier-protein] synthase from Maricaulis maris (strain MCS10) (Caulobacter maris).